A 314-amino-acid polypeptide reads, in one-letter code: Olfactory receptor 8U9 (314 aa).

Over 1 to 25 (MAQINCTQVTEFILVGLTDREELKM) the chain is Extracellular. An N-linked (GlcNAc...) asparagine glycan is attached at asparagine 5. Residues 26 to 46 (PLFVVFLSIYLFTTLGNLGLI) form a helical membrane-spanning segment. At 47 to 54 (LVIRTDAR) the chain is on the cytoplasmic side. Residues 55 to 75 (LHTPMYFFLSNLAFVDFCYSS) traverse the membrane as a helical segment. Residues 76-99 (VITPKMLGNFLYKQNMISFNACAA) are Extracellular-facing. Cysteine 97 and cysteine 189 are oxidised to a cystine. Residues 100 to 120 (QLGCFLAFMTAECLLLASMAY) form a helical membrane-spanning segment. At 121-133 (DRYVAICNPLLYM) the chain is on the cytoplasmic side. The helical transmembrane segment at 134–154 (VLMSPGICFQLVAAPYSYSFL) threads the bilayer. Residues 155–196 (VALFHAILTFRLCYCHSNAINHFYCDDMPLLRLTCSDTHSKQ) lie on the Extracellular side of the membrane. The chain crosses the membrane as a helical span at residues 197–217 (LWIFVCAGIMFISSLLIVFIS). Residues 218–237 (YTFIISAILRMRSAEGRRKA) are Cytoplasmic-facing. Residues 238–258 (FSTCGSHMLAVTIFYGTLIFM) traverse the membrane as a helical segment. At 259–271 (YLQPSSNHSLDTD) the chain is on the extracellular side. Asparagine 265 carries an N-linked (GlcNAc...) asparagine glycan. A helical transmembrane segment spans residues 272–292 (KMASVFYTVIIPMLNPLIYSL). Residues 293-314 (RNKEVKDALKKLIASKNQMLSS) lie on the Cytoplasmic side of the membrane.

It belongs to the G-protein coupled receptor 1 family.

It localises to the cell membrane. Its function is as follows. Potential odorant receptor. The sequence is that of Olfactory receptor 8U9 from Mus musculus (Mouse).